The following is a 466-amino-acid chain: Bifunctional protein GlmU (466 aa).

Positions 1–233 (MLHKSVLGLV…ADEAMGANDR (233 aa)) are pyrophosphorylase. Residues 11–14 (LAAG), lysine 25, glutamine 79, and 84–85 (GT) each bind UDP-N-acetyl-alpha-D-glucosamine. Aspartate 108 serves as a coordination point for Mg(2+). The UDP-N-acetyl-alpha-D-glucosamine site is built by glycine 143, glutamate 158, asparagine 173, and asparagine 231. Residue asparagine 231 coordinates Mg(2+). Positions 234–254 (AQLAALEAVYRQRKVQELFAQ) are linker. The tract at residues 255–466 (GVTLIDPNRI…QKKKEHKNDA (212 aa)) is N-acetyltransferase. UDP-N-acetyl-alpha-D-glucosamine-binding residues include arginine 337 and lysine 355. The active-site Proton acceptor is histidine 367. 2 residues coordinate UDP-N-acetyl-alpha-D-glucosamine: tyrosine 370 and asparagine 381. Residues alanine 384, 390–391 (NY), serine 409, alanine 427, and arginine 444 each bind acetyl-CoA.

It in the N-terminal section; belongs to the N-acetylglucosamine-1-phosphate uridyltransferase family. In the C-terminal section; belongs to the transferase hexapeptide repeat family. As to quaternary structure, homotrimer. The cofactor is Mg(2+).

It is found in the cytoplasm. It catalyses the reaction alpha-D-glucosamine 1-phosphate + acetyl-CoA = N-acetyl-alpha-D-glucosamine 1-phosphate + CoA + H(+). The catalysed reaction is N-acetyl-alpha-D-glucosamine 1-phosphate + UTP + H(+) = UDP-N-acetyl-alpha-D-glucosamine + diphosphate. It participates in nucleotide-sugar biosynthesis; UDP-N-acetyl-alpha-D-glucosamine biosynthesis; N-acetyl-alpha-D-glucosamine 1-phosphate from alpha-D-glucosamine 6-phosphate (route II): step 2/2. The protein operates within nucleotide-sugar biosynthesis; UDP-N-acetyl-alpha-D-glucosamine biosynthesis; UDP-N-acetyl-alpha-D-glucosamine from N-acetyl-alpha-D-glucosamine 1-phosphate: step 1/1. It functions in the pathway bacterial outer membrane biogenesis; LPS lipid A biosynthesis. Catalyzes the last two sequential reactions in the de novo biosynthetic pathway for UDP-N-acetylglucosamine (UDP-GlcNAc). The C-terminal domain catalyzes the transfer of acetyl group from acetyl coenzyme A to glucosamine-1-phosphate (GlcN-1-P) to produce N-acetylglucosamine-1-phosphate (GlcNAc-1-P), which is converted into UDP-GlcNAc by the transfer of uridine 5-monophosphate (from uridine 5-triphosphate), a reaction catalyzed by the N-terminal domain. The polypeptide is Bifunctional protein GlmU (Dichelobacter nodosus (strain VCS1703A)).